The sequence spans 212 residues: ATP-dependent dethiobiotin synthetase BioD (212 aa).

12–17 (DCGKTF) contacts ATP. Threonine 16 serves as a coordination point for Mg(2+). Residue lysine 33 is part of the active site. Position 37 (serine 37) interacts with substrate. Residues aspartate 50, 110–113 (EGAG), and 170–171 (NC) contribute to the ATP site. The Mg(2+) site is built by aspartate 50 and glutamate 110.

Belongs to the dethiobiotin synthetase family. In terms of assembly, homodimer. It depends on Mg(2+) as a cofactor.

The protein resides in the cytoplasm. The catalysed reaction is (7R,8S)-7,8-diammoniononanoate + CO2 + ATP = (4R,5S)-dethiobiotin + ADP + phosphate + 3 H(+). The protein operates within cofactor biosynthesis; biotin biosynthesis; biotin from 7,8-diaminononanoate: step 1/2. Functionally, catalyzes a mechanistically unusual reaction, the ATP-dependent insertion of CO2 between the N7 and N8 nitrogen atoms of 7,8-diaminopelargonic acid (DAPA, also called 7,8-diammoniononanoate) to form a ureido ring. This Legionella pneumophila (strain Corby) protein is ATP-dependent dethiobiotin synthetase BioD.